The following is a 136-amino-acid chain: uncharacterized protein (136 aa).

This is an uncharacterized protein from Gallus gallus (Chicken).